The primary structure comprises 189 residues: MVWLLAILAYLLGSLSFAVLLSRWFGTQDPRASGSGNPGATNMLRVAGKKLAILTLLGDVGKGLLPVLVARWLGLGVMEEAWVGIAAVIGHLYPLYFNFRGGKGVATAAGMLLGLYPPAVLLAAAAWLLTFKLSRTSSLASLVATPLTLPLLAWQQPGALLPMTVLTALIVWRHRANLRDLFAGRERHF.

Transmembrane regions (helical) follow at residues 1–21 (MVWLLAILAYLLGSLSFAVLL), 50–70 (KLAILTLLGDVGKGLLPVLVA), 72–92 (WLGLGVMEEAWVGIAAVIGHL), 111–131 (MLLGLYPPAVLLAAAAWLLTF), and 151–171 (LLAWQQPGALLPMTVLTALIV).

This sequence belongs to the PlsY family. Probably interacts with PlsX.

The protein resides in the cell inner membrane. It catalyses the reaction an acyl phosphate + sn-glycerol 3-phosphate = a 1-acyl-sn-glycero-3-phosphate + phosphate. The protein operates within lipid metabolism; phospholipid metabolism. In terms of biological role, catalyzes the transfer of an acyl group from acyl-phosphate (acyl-PO(4)) to glycerol-3-phosphate (G3P) to form lysophosphatidic acid (LPA). This enzyme utilizes acyl-phosphate as fatty acyl donor, but not acyl-CoA or acyl-ACP. The polypeptide is Glycerol-3-phosphate acyltransferase (Pseudomonas paraeruginosa (strain DSM 24068 / PA7) (Pseudomonas aeruginosa (strain PA7))).